A 72-amino-acid chain; its full sequence is UPF0154 protein Bcer98_2334 (72 aa).

Residues 3-23 traverse the membrane as a helical segment; it reads IWSGILVGVVALLAGVALGFF.

Belongs to the UPF0154 family.

It is found in the cell membrane. The chain is UPF0154 protein Bcer98_2334 from Bacillus cytotoxicus (strain DSM 22905 / CIP 110041 / 391-98 / NVH 391-98).